The chain runs to 768 residues: Mitochondrial 15S rRNA processing factor CCM1 (768 aa).

A mitochondrion-targeting transit peptide spans 1–90 (MIRLIRWNNV…RSFTKVIAQH (90 aa)). Disordered regions lie at residues 28–65 (NKRK…NTGS) and 90–114 (HLKP…LPPI). The segment covering 43-53 (NRKDGDIEPYR) has biased composition (basic and acidic residues). The span at 55–65 (TDQNQTPNTGS) shows a compositional bias: polar residues. PPR repeat units follow at residues 274–308 (KIDH…NIEI), 309–344 (SKMI…SQKT), 347–381 (DEKV…GMNV), 382–417 (NQNL…GWVP), and 418–452 (NLQT…NSVT). A compositionally biased stretch (basic and acidic residues) spans 583-596 (IEPRQDEPTEKATT). The interval 583–609 (IEPRQDEPTEKATTTEEQNASSETDNN) is disordered. Residues 597 to 609 (TEEQNASSETDNN) show a composition bias toward polar residues. A PPR 6 repeat occupies 634–664 (DSYLYNLAIKAAGKFKNYGFAQEILHERGQF).

This sequence belongs to the CCM1 family. Binds to mitochondrial small subunit 15S rRNA.

The protein localises to the mitochondrion. In terms of biological role, regulates mitochondrial small subunit maturation by controlling 15S rRNA 5'-end processing. Localizes to the 5' precursor of the 15S rRNA in a position that is subsequently occupied by mS47 in the mature yeast mtSSU. Uses structure and sequence-specific RNA recognition, binding to a single-stranded region of the precursor and specifically recognizing bases -6 to -1. The exchange of Ccm1 for mS47 is coupled to the irreversible removal of precursor rRNA that is accompanied by conformational changes of the mitoribosomal proteins uS5m and mS26. These conformational changes signal completion of 5'-end rRNA processing through protection of the mature 5'-end of the 15S rRNA and stabilization of mS47. The removal of the 5' precursor together with the dissociation of Ccm1 may be catalyzed by the 5'-3' exoribonuclease Pet127. Involved in the specific removal of group I introns in mitochondrial encoded transcripts. This is Mitochondrial 15S rRNA processing factor CCM1 (CCM1) from Candida albicans (strain SC5314 / ATCC MYA-2876) (Yeast).